The primary structure comprises 173 residues: ATP synthase subunit b 1 (173 aa).

The chain crosses the membrane as a helical span at residues 15–37 (TFWVTVAVLIFLAFFGRKIVGAI).

The protein belongs to the ATPase B chain family. In terms of assembly, F-type ATPases have 2 components, F(1) - the catalytic core - and F(0) - the membrane proton channel. F(1) has five subunits: alpha(3), beta(3), gamma(1), delta(1), epsilon(1). F(0) has three main subunits: a(1), b(2) and c(10-14). The alpha and beta chains form an alternating ring which encloses part of the gamma chain. F(1) is attached to F(0) by a central stalk formed by the gamma and epsilon chains, while a peripheral stalk is formed by the delta and b chains.

Its subcellular location is the cell inner membrane. Its function is as follows. F(1)F(0) ATP synthase produces ATP from ADP in the presence of a proton or sodium gradient. F-type ATPases consist of two structural domains, F(1) containing the extramembraneous catalytic core and F(0) containing the membrane proton channel, linked together by a central stalk and a peripheral stalk. During catalysis, ATP synthesis in the catalytic domain of F(1) is coupled via a rotary mechanism of the central stalk subunits to proton translocation. Functionally, component of the F(0) channel, it forms part of the peripheral stalk, linking F(1) to F(0). This Acidiphilium cryptum (strain JF-5) protein is ATP synthase subunit b 1.